The sequence spans 225 residues: MNSMEFPFLDRTTPNSVISTTLNDLSNWSRLSSLWPLLYGTSCCFIEFASLIGSRFDFDRYGLVPRSSPRQADLILTAGTVTMKMAPSLVRLYEQMPEPKYVIAMGACTITGGMFSTDSYSTVRGVDKLIPVDVYLPGCPPKPEAIIDAITKLRKKVSREIYEDRTESQQENRCFTTNHKFHLGRSTRAVNYDQGLLYQSTSTSEIPSEAFFKYKSSVSSHELVN.

The [4Fe-4S] cluster site is built by C43, C44, C108, and C139.

The protein belongs to the complex I 20 kDa subunit family. In terms of assembly, NDH is composed of at least 16 different subunits, 5 of which are encoded in the nucleus. It depends on [4Fe-4S] cluster as a cofactor.

Its subcellular location is the plastid. The protein localises to the chloroplast thylakoid membrane. The enzyme catalyses a plastoquinone + NADH + (n+1) H(+)(in) = a plastoquinol + NAD(+) + n H(+)(out). It carries out the reaction a plastoquinone + NADPH + (n+1) H(+)(in) = a plastoquinol + NADP(+) + n H(+)(out). In terms of biological role, NDH shuttles electrons from NAD(P)H:plastoquinone, via FMN and iron-sulfur (Fe-S) centers, to quinones in the photosynthetic chain and possibly in a chloroplast respiratory chain. The immediate electron acceptor for the enzyme in this species is believed to be plastoquinone. Couples the redox reaction to proton translocation, and thus conserves the redox energy in a proton gradient. The chain is NAD(P)H-quinone oxidoreductase subunit K, chloroplastic from Nuphar advena (Common spatterdock).